We begin with the raw amino-acid sequence, 571 residues long: Glutamate--tRNA ligase (571 aa).

Positions 110–120 match the 'HIGH' region motif; sequence PNPNGPATLGS.

Belongs to the class-I aminoacyl-tRNA synthetase family. Glutamate--tRNA ligase type 2 subfamily.

It is found in the cytoplasm. It catalyses the reaction tRNA(Glu) + L-glutamate + ATP = L-glutamyl-tRNA(Glu) + AMP + diphosphate. Its function is as follows. Catalyzes the attachment of glutamate to tRNA(Glu) in a two-step reaction: glutamate is first activated by ATP to form Glu-AMP and then transferred to the acceptor end of tRNA(Glu). In Methanosarcina barkeri (strain Fusaro / DSM 804), this protein is Glutamate--tRNA ligase.